Reading from the N-terminus, the 119-residue chain is Ethylene-responsive proteinase inhibitor 1 (119 aa).

Positions 1–27 are cleaved as a signal peptide; the sequence is MEANKSMVKLVAFLIILVSSCFQSLTA. Positions 28 to 48 are excised as a propeptide; it reads QDLEIEVSDGLNVLQVHDVSQ.

Belongs to the protease inhibitor I13 (potato type I serine protease inhibitor) family.

Its subcellular location is the secreted. The sequence is that of Ethylene-responsive proteinase inhibitor 1 from Solanum lycopersicum (Tomato).